Here is a 426-residue protein sequence, read N- to C-terminus: Tol-Pal system protein TolB (426 aa).

Positions 1 to 24 (MKLKSRFTSIIGVITLFFSQTVTA) are cleaved as a signal peptide.

It belongs to the TolB family. In terms of assembly, the Tol-Pal system is composed of five core proteins: the inner membrane proteins TolA, TolQ and TolR, the periplasmic protein TolB and the outer membrane protein Pal. They form a network linking the inner and outer membranes and the peptidoglycan layer.

The protein resides in the periplasm. Its function is as follows. Part of the Tol-Pal system, which plays a role in outer membrane invagination during cell division and is important for maintaining outer membrane integrity. In Actinobacillus pleuropneumoniae serotype 3 (strain JL03), this protein is Tol-Pal system protein TolB.